The sequence spans 262 residues: Eukaryotic translation initiation factor 3 subunit G (262 aa).

Positions 182 to 260 (NTCRVTNLPQ…MVLKVEWTRP (79 aa)) constitute an RRM domain.

This sequence belongs to the eIF-3 subunit G family. In terms of assembly, component of the eukaryotic translation initiation factor 3 (eIF-3) complex.

Its subcellular location is the cytoplasm. RNA-binding component of the eukaryotic translation initiation factor 3 (eIF-3) complex, which is involved in protein synthesis of a specialized repertoire of mRNAs and, together with other initiation factors, stimulates binding of mRNA and methionyl-tRNAi to the 40S ribosome. The eIF-3 complex specifically targets and initiates translation of a subset of mRNAs involved in cell proliferation. This subunit can bind 18S rRNA. Binds to GC-rich 5'UTRs in cholinergic motor neurons, thereby may play a role in translational regulation of mRNAs involved in neuropeptide signaling and stress response, including hlh-30 isoform d and ncs-2. In Caenorhabditis elegans, this protein is Eukaryotic translation initiation factor 3 subunit G.